Consider the following 299-residue polypeptide: ATP phosphoribosyltransferase (299 aa).

Belongs to the ATP phosphoribosyltransferase family. Long subfamily. The cofactor is Mg(2+).

Its subcellular location is the cytoplasm. It carries out the reaction 1-(5-phospho-beta-D-ribosyl)-ATP + diphosphate = 5-phospho-alpha-D-ribose 1-diphosphate + ATP. Its pathway is amino-acid biosynthesis; L-histidine biosynthesis; L-histidine from 5-phospho-alpha-D-ribose 1-diphosphate: step 1/9. Its activity is regulated as follows. Feedback inhibited by histidine. In terms of biological role, catalyzes the condensation of ATP and 5-phosphoribose 1-diphosphate to form N'-(5'-phosphoribosyl)-ATP (PR-ATP). Has a crucial role in the pathway because the rate of histidine biosynthesis seems to be controlled primarily by regulation of HisG enzymatic activity. The polypeptide is ATP phosphoribosyltransferase (Actinobacillus pleuropneumoniae serotype 5b (strain L20)).